Consider the following 932-residue polypeptide: Receptor-like protein 9a (932 aa).

Positions 1-28 are cleaved as a signal peptide; it reads MLIFTIPQFFFAAWVMVVSLQMQGYISC. Residues 29-888 are Extracellular-facing; sequence IEKERKGLLE…DDETAIDMET (860 aa). N-linked (GlcNAc...) asparagine glycosylation is found at N53, N80, and N90. LRR repeat units follow at residues 97–122, 126–152, 154–174, 175–200, 202–222, 223–246, 247–273, 275–295, 296–320, 322–345, 346–368, 370–393, 394–417, 418–441, 443–466, 468–491, 492–514, 516–535, 536–560, 561–583, 585–605, 606–629, 631–652, 653–676, 745–769, 770–792, 794–817, and 819–842; these read FEELRTLNLYDFGCTGWFDDIHGYKS, LKKLEILDMGNNEVNNSVLPFLNAASS, RTLILHGNNMEGTFPMKELKD, LSNLELLDLSGNLLNGPVPGLAVLHK, HALDLSDNTFSGSLGREGLCQ, LKNLQELDLSQNEFTGPFPQCFSS, LTQLQVLDMSSNQFNGTLPSVISNLDS, EYLSLSDNKFEGFFSFDLIAN, LSKLKVFKLSSKSSLLHIESEISLQ, KFRLSVIDLKYCNLEAVPSFLQQQ, KDLRLINLSNNKLTGISPSWFLE, YPKLRVLLLWNNSFTIFHLPRLLV, HSLHVLDLSVNKFDEWLPNNIGHV, LPNISHLNLSNNGFQGNLPSSFSE, KKIFFLDLSHNNLSGSLPKKFCIG, SSLSILKLSYNRFSGKIFPQPMKL, ESLRVLIADNNQFTEITDVLIHS, GLVFLELSNNSLQGVIPSWF, GGFYFLYLSVSDNLLNGTIPSTLFN, VSFQLLDLSRNKFSGNLPSHFSF, HMGLLYLHDNEFSGPVPSTLL, ENVMLLDLRNNKLSGTIPRFVSNR, FLYLLLRGNALTGHIPTSLCEL, KSIRVLDLANNRLNGSIPPCLNNV, FKFMFGLDFSSNELIGEIPRELGDF, QRIRALNLSHNSLSGLVPESFSN, TDIESIDLSFNVLHGPIPHDLTKL, and YIVVFNVSYNNLSGLIPSQGKFLS. N140 is a glycosylation site (N-linked (GlcNAc...) asparagine). N261 and N295 each carry an N-linked (GlcNAc...) asparagine glycan. N-linked (GlcNAc...) asparagine glycans are attached at residues N352 and N380. N-linked (GlcNAc...) asparagine glycans are attached at residues N420, N425, and N454. N-linked (GlcNAc...) asparagine glycosylation is found at N524, N551, and N560. N-linked (GlcNAc...) asparagine glycosylation is found at N666 and N675. Residues N776 and N792 are each glycosylated (N-linked (GlcNAc...) asparagine). N-linked (GlcNAc...) asparagine glycosylation is found at N824, N829, N860, and N866. The chain crosses the membrane as a helical span at residues 889 to 909; the sequence is FYWSLFATYGITWMAFIVFLC. Residues 910–932 lie on the Cytoplasmic side of the membrane; the sequence is FDSPWRQAWFRLVNVFVSFLKCV.

Belongs to the RLP family.

It localises to the cell membrane. The protein is Receptor-like protein 9a of Arabidopsis thaliana (Mouse-ear cress).